The chain runs to 293 residues: Mycothiol S-conjugate amidase (293 aa).

Zn(2+) is bound by residues His-13, Asp-16, and His-144.

Belongs to the MshB deacetylase family. Mca subfamily. As to quaternary structure, monomer. The cofactor is Zn(2+).

It carries out the reaction mycothiol S-conjugate + H2O = an N-acetyl-L-cysteine-S-conjugate + 1D-myo-inositol 2-amino-2-deoxy-alpha-D-glucopyranoside. In terms of biological role, a mycothiol (MSH, N-acetylcysteinyl-glucosaminyl-inositol) S-conjugate amidase, it recycles conjugated MSH to the N-acetyl cysteine conjugate (AcCys S-conjugate, a mercapturic acid) and the MSH precursor. Involved in MSH-dependent detoxification of a number of alkylating agents and antibiotics. The chain is Mycothiol S-conjugate amidase from Streptomyces coelicolor (strain ATCC BAA-471 / A3(2) / M145).